Here is a 161-residue protein sequence, read N- to C-terminus: RNA pyrophosphohydrolase (161 aa).

The Nudix hydrolase domain occupies 6–149 (GYRPNVGIIL…KREVYRRAMR (144 aa)). The Nudix box signature appears at 38 to 59 (GGIKKDESPEEALFRELKEEVG).

Belongs to the Nudix hydrolase family. RppH subfamily. A divalent metal cation is required as a cofactor.

In terms of biological role, accelerates the degradation of transcripts by removing pyrophosphate from the 5'-end of triphosphorylated RNA, leading to a more labile monophosphorylated state that can stimulate subsequent ribonuclease cleavage. This chain is RNA pyrophosphohydrolase, found in Hahella chejuensis (strain KCTC 2396).